We begin with the raw amino-acid sequence, 399 residues long: Leu/Ile/Val-binding protein homolog 7 (399 aa).

Residues 1 to 22 (MEKHLIALSVAALLAGAAPASA) form the signal peptide.

This sequence belongs to the leucine-binding protein family.

Functionally, component of an amino-acid transport system. The chain is Leu/Ile/Val-binding protein homolog 7 from Brucella melitensis biotype 1 (strain ATCC 23456 / CCUG 17765 / NCTC 10094 / 16M).